The chain runs to 511 residues: Maturase K (511 aa).

It belongs to the intron maturase 2 family. MatK subfamily.

Its subcellular location is the plastid. It is found in the chloroplast. Usually encoded in the trnK tRNA gene intron. Probably assists in splicing its own and other chloroplast group II introns. The polypeptide is Maturase K (Brachypodium distachyon (Purple false brome)).